The chain runs to 367 residues: MYPESTTDSPARLSLRQTGSPGMIYSARYGSPKRQLQFYRNLGKSGLRVSCLGLGTWVTFGGQITDEMAEQLMTLAYDNGINLFDTAEVYAAGKAEVVLGNIIKKKGWRRSSLVITTKIFWGGKAETERGLSRKHIIEGLKASLERLQLDYVDVVFANRPDPNTPMEETVRAMTHVINQGMAMYWGTSRWSSMEIMEAYSVARQFNLIPPICEQAEYHMFQREKVEVQLPELFHKIGVGAMTWSPLACGIVSGKYDGGIPPYSRASLKGYQWLKDKILSEEGRRQQAKLKEFQAIAERLGCTLPQLAIAWCLRNEGVSSVLLGASNADQLLENIGAIQVLPKLSSSIIHEIDGILGNKPYSKKDYRS.

The NADP(+) site is built by T56, W57, Q63, and D85. The Proton donor/acceptor role is filled by Y90. The NADP(+) site is built by N158, S188, R189, Q214, W243, S244, P245, L246, A247, C248, K254, Y262, R264, G323, S325, Q329, E332, and N333.

The protein belongs to the shaker potassium channel beta subunit family. In terms of assembly, forms heteromultimeric complex with alpha subunits.

Its subcellular location is the cytoplasm. It localises to the membrane. The protein resides in the cell membrane. It is found in the cell projection. The protein localises to the axon. Its subcellular location is the synapse. It localises to the synaptosome. The protein resides in the cytoskeleton. Its function is as follows. Regulatory subunit of the voltage-gated potassium (Kv) Shaker channels composed of pore-forming and potassium-conducting alpha subunits and of regulatory beta subunits. The beta-2/KCNAB2 cytoplasmic subunit may promote potassium channel closure via a mechanism that does not involve physical obstruction of the channel pore. Enhances current amplitude of Kv1.1/KCNA1 and Kv2.2/KCNA2 channels. May display nicotinamide adenine dinucleotide phosphate (NADPH)-dependent aldoketoreductase activity by catalyzing the NADPH-dependent reduction of a wide range of aldehyde and ketone substrates. The binding of oxidized and reduced nucleotide may alter Kv channel gating and contribute to dynamic fine tuning of cell excitability. In Xenopus laevis (African clawed frog), this protein is Voltage-gated potassium channel subunit beta-2 (kcnab2).